Reading from the N-terminus, the 655-residue chain is Kelch-like protein 13 (655 aa).

The 70-residue stretch at 92–161 (CDVTLMPGDT…IYTAKLSLNM (70 aa)) folds into the BTB domain. The BACK domain maps to 196 to 297 (CVEVGRIANT…TPQELINYVQ (102 aa)). Kelch repeat units lie at residues 341–389 (HLVT…VIGN), 390–441 (FLYV…ALKG), 442–488 (YLYA…VYGG), 490–535 (MYIS…TVGE), 537–587 (LYVI…VFEN), and 588–636 (KIYV…TLTV).

In terms of assembly, component of the BCR(KLHL9-KLHL13) E3 ubiquitin ligase complex, at least composed of CUL3, KLHL9, KLHL13 and RBX1. Interacts with AURKB.

It participates in protein modification; protein ubiquitination. Substrate-specific adapter of a BCR (BTB-CUL3-RBX1) E3 ubiquitin-protein ligase complex required for mitotic progression and cytokinesis. The BCR(KLHL9-KLHL13) E3 ubiquitin ligase complex mediates the ubiquitination of AURKB and controls the dynamic behavior of AURKB on mitotic chromosomes and thereby coordinates faithful mitotic progression and completion of cytokinesis. The sequence is that of Kelch-like protein 13 (KLHL13) from Homo sapiens (Human).